Here is a 758-residue protein sequence, read N- to C-terminus: MRFAFFGIFWLQIFGSILFLLGFFPHKNDSTGKAMSNQFSPPAVIDQVVFVMVDALRADFVFSKSHNMPFTQSLLYNSTHGIGFSAFARSPTVTMPRLKALTTGTIPGFLDVLLNIAESDTGSSIEAQDSWVYQLNSFNKKIEFYGDDTWLKLFPSAFSKFEGTTSFFVSDYTEVDNNVTRNFDHALPSSLSHSWDALILHYLGVDHIGHLYGPSSPLLNIKLLEIDTIISRIYKYLQEYDEKTNTHSLIVLCGDHGMNEVGNHGGSSSGETTAALSLLFPSNELSHINKPILNMDDNPYSILERVEQVDVVPTICLLLGIPIPKGNMGKVLSPVTELWKDTKTAKMAALSNLFQLSLLKNPSLTTSELSTQFQDSDLNDIRLALENLQSQMVAQSSSYSLDRMLVAISILGACSILSLILFRNLYNYKELLAFAPFVVQNIIIVFSSSFIEEEHVIWYFAAVSLSLLQLLNPKTRLAGSLQLFCLSIIKRWNQTGQKYSDLRDIVDDFIAPSTFMKTILCVTSAFMPAIRSPSPINFLSSMFIAFYKLMPIISKHLNELPIIASFDYTFFVRIIWSLLLISFLSKPTFKQLRCQLSLFILLLTRLENMGLYLLYDIWQRTMPEEGTLASVMYYVAEQVAFFSLGNSNSLATVDLSQAYTGLDSYNIFAVGILLFTSVFAGALWWCLHQPKRMMDRSVKTFWIMSSISLTFLCISCFIMRHHLFVWSVFSPKLLYNASWASMYFLAKCLISTIMVRLR.

Asn28, Asn77, and Asn178 each carry an N-linked (GlcNAc...) asparagine glycan. The next 3 helical transmembrane spans lie at 405–425, 431–451, and 455–472; these read LVAI…FRNL, LLAF…SSFI, and HVIW…QLLN. Residue Asn493 is glycosylated (N-linked (GlcNAc...) asparagine). The next 6 membrane-spanning stretches (helical) occupy residues 533–553, 561–581, 598–618, 667–687, 698–718, and 733–753; these read PSPI…MPII, PIIA…LLLI, LFIL…YDIW, IFAV…WWCL, VKTF…SCFI, and LLYN…ISTI.

It belongs to the PIGG/PIGN/PIGO family. PIGG subfamily.

Its subcellular location is the endoplasmic reticulum membrane. The protein operates within glycolipid biosynthesis; glycosylphosphatidylinositol-anchor biosynthesis. In terms of biological role, ethanolamine phosphate transferase involved in glycosylphosphatidylinositol-anchor biosynthesis. Transfers ethanolamine phosphate to the GPI second mannose. The chain is GPI ethanolamine phosphate transferase 2 (las21) from Schizosaccharomyces pombe (strain 972 / ATCC 24843) (Fission yeast).